We begin with the raw amino-acid sequence, 441 residues long: Xylose isomerase (441 aa).

Active-site residues include H99 and D102. Residues E230, E266, D294, D305, D307, and D337 each coordinate Mn(2+).

Belongs to the xylose isomerase family. Homotetramer. The cofactor is Mn(2+).

It localises to the cytoplasm. The catalysed reaction is alpha-D-xylose = alpha-D-xylulofuranose. The sequence is that of Xylose isomerase (xylA) from Geobacillus stearothermophilus (Bacillus stearothermophilus).